The primary structure comprises 320 residues: Undecaprenyl-diphosphatase (320 aa).

The next 8 membrane-spanning stretches (helical) occupy residues 9-29, 82-102, 130-150, 161-181, 191-211, 236-256, 265-285, and 296-316; these read FVLI…LEVF, GVAF…WYFW, LGIV…KTFI, LGAI…GEKL, LTMQ…IPGV, FLLG…DLLA, LPLI…IAGL, and VFIW…SAGI.

This sequence belongs to the UppP family.

The protein resides in the cell inner membrane. The catalysed reaction is di-trans,octa-cis-undecaprenyl diphosphate + H2O = di-trans,octa-cis-undecaprenyl phosphate + phosphate + H(+). Catalyzes the dephosphorylation of undecaprenyl diphosphate (UPP). Confers resistance to bacitracin. This Nostoc sp. (strain PCC 7120 / SAG 25.82 / UTEX 2576) protein is Undecaprenyl-diphosphatase.